The chain runs to 495 residues: Inner membrane ALBINO3-like protein 1, chloroplastic (495 aa).

Residues 76 to 96 (LGAIYVLADASASTAAAAVMP) traverse the membrane as a helical segment. Residues 97 to 206 (TAVDSAAGAA…VLYEQAGVNP (110 aa)) lie on the Stromal side of the membrane. The helical transmembrane segment at 207–227 (LAGCLPTLATIPIFIGLFSSL) threads the bilayer. Topologically, residues 228 to 273 (TNVANDGLLDTQGFYFVPSLAGPTTMAMRQSGLGTSWLWPLGPDGA) are lumenal. Residues 274-294 (PPIGWEDAAAYLTLPLLLVAV) form a helical membrane-spanning segment. The Stromal segment spans residues 295-317 (QYASSSVTSPPIDPKDENANTQR). Residues 318-338 (ALLVFLPLMVGWFSLNVPAGL) traverse the membrane as a helical segment. At 339-441 (SLYYLANTVL…ASVSLSVDDS (103 aa)) the chain is on the lumenal side. Residues 442–462 (TAAIAGTATMAVTAGAPAAAM) traverse the membrane as a helical segment. At 463–495 (DPSKVNRRCKRRRLTSLVQDGSTASAAVAGASA) the chain is on the stromal side.

The protein belongs to the OXA1/ALB3/YidC (TC 2.A.9.2) family. In terms of assembly, associates with the LHCII complex and with the psaE subunit of the LHCI complex.

The protein localises to the plastid. Its subcellular location is the chloroplast thylakoid membrane. In terms of biological role, required for the insertion of some light-harvesting complexes (LHC) proteins into the chloroplast thylakoid membrane. Essential for the assembly and activity of LHC I and II. Its function is probably partly distinct from that of ALB3.2. In Chlamydomonas reinhardtii (Chlamydomonas smithii), this protein is Inner membrane ALBINO3-like protein 1, chloroplastic (ALB3.1).